The chain runs to 241 residues: 1-(5-phosphoribosyl)-5-[(5-phosphoribosylamino)methylideneamino] imidazole-4-carboxamide isomerase (241 aa).

D8 serves as the catalytic Proton acceptor. D129 functions as the Proton donor in the catalytic mechanism.

The protein belongs to the HisA/HisF family.

Its subcellular location is the cytoplasm. The enzyme catalyses 1-(5-phospho-beta-D-ribosyl)-5-[(5-phospho-beta-D-ribosylamino)methylideneamino]imidazole-4-carboxamide = 5-[(5-phospho-1-deoxy-D-ribulos-1-ylimino)methylamino]-1-(5-phospho-beta-D-ribosyl)imidazole-4-carboxamide. It participates in amino-acid biosynthesis; L-histidine biosynthesis; L-histidine from 5-phospho-alpha-D-ribose 1-diphosphate: step 4/9. This is 1-(5-phosphoribosyl)-5-[(5-phosphoribosylamino)methylideneamino] imidazole-4-carboxamide isomerase from Rhodospirillum rubrum (strain ATCC 11170 / ATH 1.1.1 / DSM 467 / LMG 4362 / NCIMB 8255 / S1).